The primary structure comprises 470 residues: Nuclear receptor subfamily 0 group B member 1 (470 aa).

A run of 3 repeats spans residues 1–67, 68–133, and 134–200. The interval 1–253 is 4 X 67 AA tandem repeats; sequence MAGENHQWQG…RPVALKSPQV (253 aa). Short sequence motifs (LXXLL motif) lie at residues 13 to 17, 80 to 84, and 146 to 150; these read LYNML, LYSML, and LYSLL. The 4; truncated repeat unit spans residues 201-253; sequence FCGEDHPQQGSTLYCVPTSTNQAQAAPEERPRAPWWDTSSGALRPVALKSPQV. The NR LBD domain occupies 205-469; the sequence is DHPQQGSTLY…DMMLEMLCTK (265 aa). Positions 461 to 466 match the AF-2 motif motif; sequence MMLEML.

This sequence belongs to the nuclear hormone receptor family. NR0 subfamily. As to quaternary structure, homodimer. Interacts with NR5A1, NR5A2, NR0B2 and with COPS2. Interacts with ESRRB; represses ESRRB activity at the GATA6 promoter.

It is found in the nucleus. The protein resides in the cytoplasm. Functionally, nuclear receptor that lacks a DNA-binding domain and acts as a corepressor that inhibits the transcriptional activity of other nuclear receptors through heterodimeric interactions. Component of a cascade required for the development of the hypothalamic-pituitary-adrenal-gonadal axis. May also have a role in the development of the embryo and in the maintenance of embryonic stem cell pluripotency. This chain is Nuclear receptor subfamily 0 group B member 1 (NR0B1), found in Homo sapiens (Human).